We begin with the raw amino-acid sequence, 296 residues long: GTP-binding protein GEM (296 aa).

2 disordered regions span residues 1-20 (MTLN…PQQQ) and 37-68 (PHQY…SVIS). A compositionally biased stretch (low complexity) spans 57-68 (SWSSDSTDSVIS). Residues 82–89 (GEQGVGKS) and 191–194 (NKSD) contribute to the GTP site. Positions 266-285 (ARRFWGKIVAKNNKNMAFKL) are calmodulin-binding.

It belongs to the small GTPase superfamily. RGK family. Interacts with calmodulin in a Ca(2+)-dependent manner. Binds ROCK1. In terms of processing, phosphorylated on tyrosine residues.

The protein localises to the cell membrane. Functionally, could be a regulatory protein, possibly participating in receptor-mediated signal transduction at the plasma membrane. Has guanine nucleotide-binding activity but undetectable intrinsic GTPase activity. This chain is GTP-binding protein GEM (GEM), found in Pongo abelii (Sumatran orangutan).